The primary structure comprises 310 residues: Putative methyltransferase mtx subunit H (310 aa).

It belongs to the MtrH family. As to quaternary structure, may be part of a complex composed of 3 subunits; MtxA, MtxH and MtxX.

This is Putative methyltransferase mtx subunit H (mtxH) from Methanosarcina mazei (strain ATCC BAA-159 / DSM 3647 / Goe1 / Go1 / JCM 11833 / OCM 88) (Methanosarcina frisia).